The primary structure comprises 798 residues: Penicillin-binding protein 1A (798 aa).

Topologically, residues 1 to 9 are cytoplasmic; the sequence is MIKKIITTC. The helical; Signal-anchor for type II membrane protein transmembrane segment at 10–30 threads the bilayer; that stretch reads MGLNNGLALFGVGLIAIAILV. Residues 31–798 lie on the Periplasmic side of the membrane; it reads TYPKLPSLDS…NNRQQLDSLF (768 aa). The interval 50-218 is transglycosylase; sequence LTIYSSDGQV…SAYNPIVNPE (169 aa). E88 serves as the catalytic Proton donor; for transglycosylase activity. The tract at residues 413 to 699 is transpeptidase; it reads TVVQEPLLQG…GTIAVPVWVE (287 aa). S460 acts as the Acyl-ester intermediate; for transpeptidase activity in catalysis. The segment at 734 to 798 is disordered; the sequence is TSSDLALDNS…NNRQQLDSLF (65 aa). The segment covering 782–798 has biased composition (polar residues); sequence LPSNTGNNNRQQLDSLF.

It in the N-terminal section; belongs to the glycosyltransferase 51 family. This sequence in the C-terminal section; belongs to the transpeptidase family.

It localises to the cell inner membrane. The catalysed reaction is [GlcNAc-(1-&gt;4)-Mur2Ac(oyl-L-Ala-gamma-D-Glu-L-Lys-D-Ala-D-Ala)](n)-di-trans,octa-cis-undecaprenyl diphosphate + beta-D-GlcNAc-(1-&gt;4)-Mur2Ac(oyl-L-Ala-gamma-D-Glu-L-Lys-D-Ala-D-Ala)-di-trans,octa-cis-undecaprenyl diphosphate = [GlcNAc-(1-&gt;4)-Mur2Ac(oyl-L-Ala-gamma-D-Glu-L-Lys-D-Ala-D-Ala)](n+1)-di-trans,octa-cis-undecaprenyl diphosphate + di-trans,octa-cis-undecaprenyl diphosphate + H(+). It carries out the reaction Preferential cleavage: (Ac)2-L-Lys-D-Ala-|-D-Ala. Also transpeptidation of peptidyl-alanyl moieties that are N-acyl substituents of D-alanine.. Its pathway is cell wall biogenesis; peptidoglycan biosynthesis. Cell wall formation. Synthesis of cross-linked peptidoglycan from the lipid intermediates. The enzyme has a penicillin-insensitive transglycosylase N-terminal domain (formation of linear glycan strands) and a penicillin-sensitive transpeptidase C-terminal domain (cross-linking of the peptide subunits). This is Penicillin-binding protein 1A (mrcA) from Neisseria flavescens.